Reading from the N-terminus, the 284-residue chain is UPF0276 protein PA3283 (284 aa).

Belongs to the UPF0276 family.

This Pseudomonas aeruginosa (strain ATCC 15692 / DSM 22644 / CIP 104116 / JCM 14847 / LMG 12228 / 1C / PRS 101 / PAO1) protein is UPF0276 protein PA3283.